The primary structure comprises 107 residues: Anaphase-promoting complex subunit 14 (107 aa).

In terms of assembly, the APC/C is composed of at least 13 subunits: apc1, apc2, nuc2, apc4, apc5, cut9, apc8, apc10, apc11, hcn1, apc13, apc14 and apc15.

The protein resides in the ascus epiplasm. Its function is as follows. Component of the anaphase promoting complex/cyclosome (APC/C), a cell cycle-regulated E3 ubiquitin-protein ligase complex that controls progression through mitosis and the G1 phase of the cell cycle. The APC/C is thought to confer substrate specificity and, in the presence of ubiquitin-conjugating E2 enzymes, it catalyzes the formation of protein-ubiquitin conjugates that are subsequently degraded by the 26S proteasome. Appears to play a role in spore wall formation. The chain is Anaphase-promoting complex subunit 14 from Schizosaccharomyces pombe (strain 972 / ATCC 24843) (Fission yeast).